The primary structure comprises 206 residues: Protein-methionine-sulfoxide reductase heme-binding subunit MsrQ (206 aa).

Helical transmembrane passes span 7–27 (IIIH…LLSG), 43–63 (FLGF…KVFY), 77–97 (LGLW…ALEL), 112–132 (GYLI…LSSW), 142–162 (WWFY…IHYV), and 172–192 (SMLY…GLFI).

It belongs to the MsrQ family. In terms of assembly, heterodimer of a catalytic subunit (MsrP) and a heme-binding subunit (MsrQ). FMN serves as cofactor. Heme b is required as a cofactor.

The protein resides in the cell inner membrane. Its function is as follows. Part of the MsrPQ system that repairs oxidized periplasmic proteins containing methionine sulfoxide residues (Met-O), using respiratory chain electrons. Thus protects these proteins from oxidative-stress damage caused by reactive species of oxygen and chlorine generated by the host defense mechanisms. MsrPQ is essential for the maintenance of envelope integrity under bleach stress, rescuing a wide series of structurally unrelated periplasmic proteins from methionine oxidation. MsrQ provides electrons for reduction to the reductase catalytic subunit MsrP, using the quinone pool of the respiratory chain. In Pasteurella multocida (strain Pm70), this protein is Protein-methionine-sulfoxide reductase heme-binding subunit MsrQ.